The chain runs to 331 residues: Major outer membrane protein P.IB (331 aa).

The first 19 residues, 1-19 (MKKSLIALTLAALPVAAMA), serve as a signal peptide directing secretion.

Belongs to the Gram-negative porin family. Homotrimer.

Its subcellular location is the cell outer membrane. In terms of biological role, serves as a slightly cation selective porin. This is Major outer membrane protein P.IB (porB) from Neisseria meningitidis serogroup B.